Reading from the N-terminus, the 649-residue chain is Acetyl-coenzyme A synthetase (649 aa).

CoA is bound by residues 191–194 (RGGR), Thr-311, and Asn-335. ATP-binding positions include 387 to 389 (GEP), 411 to 416 (DTWWQT), Asp-500, and Arg-515. Ser-523 provides a ligand contact to CoA. Residue Arg-526 coordinates ATP. Positions 537, 539, and 542 each coordinate Mg(2+). A CoA-binding site is contributed by Arg-584. Lys-609 is modified (N6-acetyllysine).

Belongs to the ATP-dependent AMP-binding enzyme family. Mg(2+) is required as a cofactor. Acetylated. Deacetylation by the SIR2-homolog deacetylase activates the enzyme.

It carries out the reaction acetate + ATP + CoA = acetyl-CoA + AMP + diphosphate. Catalyzes the conversion of acetate into acetyl-CoA (AcCoA), an essential intermediate at the junction of anabolic and catabolic pathways. AcsA undergoes a two-step reaction. In the first half reaction, AcsA combines acetate with ATP to form acetyl-adenylate (AcAMP) intermediate. In the second half reaction, it can then transfer the acetyl group from AcAMP to the sulfhydryl group of CoA, forming the product AcCoA. In Psychromonas ingrahamii (strain DSM 17664 / CCUG 51855 / 37), this protein is Acetyl-coenzyme A synthetase.